The sequence spans 262 residues: Putative hydro-lyase BLi00500/BL02808 (262 aa).

Belongs to the D-glutamate cyclase family.

This Bacillus licheniformis (strain ATCC 14580 / DSM 13 / JCM 2505 / CCUG 7422 / NBRC 12200 / NCIMB 9375 / NCTC 10341 / NRRL NRS-1264 / Gibson 46) protein is Putative hydro-lyase BLi00500/BL02808.